The following is a 169-amino-acid chain: Peptide methionine sulfoxide reductase MsrA (169 aa).

Cysteine 10 is a catalytic residue.

The protein belongs to the MsrA Met sulfoxide reductase family.

The enzyme catalyses L-methionyl-[protein] + [thioredoxin]-disulfide + H2O = L-methionyl-(S)-S-oxide-[protein] + [thioredoxin]-dithiol. The catalysed reaction is [thioredoxin]-disulfide + L-methionine + H2O = L-methionine (S)-S-oxide + [thioredoxin]-dithiol. Functionally, has an important function as a repair enzyme for proteins that have been inactivated by oxidation. Catalyzes the reversible oxidation-reduction of methionine sulfoxide in proteins to methionine. This is Peptide methionine sulfoxide reductase MsrA from Streptococcus pyogenes serotype M12 (strain MGAS2096).